The sequence spans 105 residues: MRKIKRNDEVIVITGKDKGKRGKVNRVLSDDRLIVSGVQIIKKHQKPNPQMGIAGGIIEKEAPIQASNVAIFNPATNKADRVGFKLQEDGNKIRVFKSNGEAIDA.

The protein belongs to the universal ribosomal protein uL24 family. Part of the 50S ribosomal subunit.

In terms of biological role, one of two assembly initiator proteins, it binds directly to the 5'-end of the 23S rRNA, where it nucleates assembly of the 50S subunit. Its function is as follows. One of the proteins that surrounds the polypeptide exit tunnel on the outside of the subunit. The polypeptide is Large ribosomal subunit protein uL24 (Saccharophagus degradans (strain 2-40 / ATCC 43961 / DSM 17024)).